A 195-amino-acid polypeptide reads, in one-letter code: Phosphoheptose isomerase (195 aa).

Residues 36 to 195 (LAHCLLSDGK…DLVDHQLFGE (160 aa)) form the SIS domain. 51 to 53 (NGG) serves as a coordination point for substrate. Residues His-60 and Glu-64 each contribute to the Zn(2+) site. Substrate-binding positions include Glu-64, 93–94 (ND), 119–121 (STS), Ser-124, and Gln-174. Residues Gln-174 and His-182 each coordinate Zn(2+).

This sequence belongs to the SIS family. GmhA subfamily. As to quaternary structure, homotetramer. The cofactor is Zn(2+).

The protein localises to the cytoplasm. The catalysed reaction is 2 D-sedoheptulose 7-phosphate = D-glycero-alpha-D-manno-heptose 7-phosphate + D-glycero-beta-D-manno-heptose 7-phosphate. It functions in the pathway carbohydrate biosynthesis; D-glycero-D-manno-heptose 7-phosphate biosynthesis; D-glycero-alpha-D-manno-heptose 7-phosphate and D-glycero-beta-D-manno-heptose 7-phosphate from sedoheptulose 7-phosphate: step 1/1. In terms of biological role, catalyzes the isomerization of sedoheptulose 7-phosphate in D-glycero-D-manno-heptose 7-phosphate. This chain is Phosphoheptose isomerase, found in Methylococcus capsulatus (strain ATCC 33009 / NCIMB 11132 / Bath).